The sequence spans 328 residues: Deoxynucleotidyltransferase terminal-interacting protein 1 (328 aa).

Disordered stretches follow at residues 1 to 30 (MGATGDTEQPRGPGGAERGGLELGDAGAAG) and 142 to 176 (ELPGIKRGRQAEEESHRGSPIPKKRKGRPPGHVLS). Gly residues predominate over residues 12–22 (GPGGAERGGLE). The interval 56–147 (MTTSFTDPAI…RLAHELPGIK (92 aa)) is important for dimerization. Over residues 142–158 (ELPGIKRGRQAEEESHR) the composition is skewed to basic and acidic residues. A DNA-binding region (a.T hook) is located at residues 158–172 (RGSPIPKKRKGRPPG). Phosphoserine is present on serine 160. The Nuclear localization signal signature appears at 163–169 (PKKRKGR). Residues 196–315 (REGPKWDPAR…MRKYMETLRT (120 aa)) form an important for DNA and nucleosome binding region. A DNA-binding region (H-T-H motif) is located at residues 215-236 (GSRANKALGMGGTRGRIYIKHP).

Monomer and homodimer. A minor proportion may form homotrimers. Interacts with ZNF541. Interacts with the terminal deoxynucleotidyltransferase DNTT. Interacts with TRERF1. Identified in a histone deacetylase complex that contains DNTTIP1, HDAC1 and MIDEAS; this complex assembles into a tetramer that contains four copies of each protein chain. Component of a histone deacetylase complex containing DNTTIP1, ZNF541, HDAC1 and HDAC2. Identified in a complex with KCTD19, HDAC1, HDAC2 and ZNF541.

It localises to the nucleus. Functionally, increases DNTT terminal deoxynucleotidyltransferase activity (in vitro). Also acts as a transcriptional regulator, binding to the consensus sequence 5'-GNTGCATG-3' following an AT-tract. Associates with RAB20 promoter and positively regulates its transcription. Binds DNA and nucleosomes; may recruit HDAC1 complexes to nucleosomes or naked DNA. The protein is Deoxynucleotidyltransferase terminal-interacting protein 1 (Dnttip1) of Mus musculus (Mouse).